Reading from the N-terminus, the 981-residue chain is MAGSSRIGFMAIAVAFHLVYILSIFDIYFVSPIVTGMKLFGVERPHESPKAPADRLVLFVGDGLRADKAFQAHPEPYPESDQDLVPRHLAPYLRSRVLEHGTFGVSHTRVPTESRPGHVALIAGLYEDVSAVATGWKMNPVNFDSVFNRSRHTWSWGSPDILPMFQHGAVPGRVDAFAYGAELEDFSKDATELDYWVFDHVKDFFAAAATNETLNTALREDKVVFFLHLLGLDTTGHSYRPYSKEYLHNIKVVDQGVKEIVELIERFYGDDRTAFVFTADHGMSDWGSHGDGHPNNTRTPLISWGSGVAAPELHPGSIAPGHDELSSDWNLDHVRRHDVAQADVAALMSYLIGTEFPANGVGQLPLNFLSASIKEKAEASLANAQVILEQYRVKEENKRNVELRYQPYGQLSDGNLDPESRISHIRSLIEAGSFEEAIEESDALMSIGLQGLRYLQTYDWLFLRALITIGYLGWMAYATTTVLSLYVVKESMSPQRTLLGSAFFLSLLVALYSSFIISKSPPAYYLYAFFPVLFWEEVYARRANVAKGFQALFGHVKSGGAVVALVFNVVLYLGVIQSLALAYIHREILTGLFVLGAFWPMTQGISFLRSHLFLSMLWFFSCLAMSTFTLLPAMKVEDIPLIMAGGGLMTFVGLAYLVLEDFILSDVSSSKTKLKRLHTSRTLLGIQVGLIILAMLVTHSSATSLQAKLGLPKGNQIVGWFVLVTSLLMPLAYRLQPNSHYMHRLAIIFLTCAPTFVILTISYEGLFYVAFSITLLSWVRLEYAVDAFTQEKAKKQATVAGSQQHTPSTFRPLSLSDARIALFFMVLLQSAFFSTGNIASISSFSLESVSRLIPVFDPFSQGALLILKIIIPFFLISANLGVLNKRLGVAPSAIFMVVLTASDVLTLYFFWVVKDEGSWLEIGSTITHFAIASFLCVFVAALEFVSAAFIAGIEVEDTKSAALTSASTKADEKVPPVAGAE.

Over 1–6 (MAGSSR) the chain is Cytoplasmic. The helical transmembrane segment at 7-27 (IGFMAIAVAFHLVYILSIFDI) threads the bilayer. Residues 28 to 464 (YFVSPIVTGM…LQTYDWLFLR (437 aa)) are Lumenal-facing. 3 N-linked (GlcNAc...) asparagine glycosylation sites follow: Asn148, Asn211, and Asn295. A helical membrane pass occupies residues 465–485 (ALITIGYLGWMAYATTTVLSL). The Cytoplasmic segment spans residues 486 to 496 (YVVKESMSPQR). A helical transmembrane segment spans residues 497–517 (TLLGSAFFLSLLVALYSSFII). Residues 518–519 (SK) are Lumenal-facing. Residues 520 to 540 (SPPAYYLYAFFPVLFWEEVYA) traverse the membrane as a helical segment. At 541–560 (RRANVAKGFQALFGHVKSGG) the chain is on the cytoplasmic side. A helical membrane pass occupies residues 561 to 581 (AVVALVFNVVLYLGVIQSLAL). The Lumenal portion of the chain corresponds to 582–587 (AYIHRE). Residues 588 to 608 (ILTGLFVLGAFWPMTQGISFL) form a helical membrane-spanning segment. The Cytoplasmic portion of the chain corresponds to 609 to 611 (RSH). A helical transmembrane segment spans residues 612–632 (LFLSMLWFFSCLAMSTFTLLP). The Lumenal portion of the chain corresponds to 633-638 (AMKVED). A helical membrane pass occupies residues 639-659 (IPLIMAGGGLMTFVGLAYLVL). Topologically, residues 660–681 (EDFILSDVSSSKTKLKRLHTSR) are cytoplasmic. A helical membrane pass occupies residues 682–702 (TLLGIQVGLIILAMLVTHSSA). At 703-708 (TSLQAK) the chain is on the lumenal side. A helical membrane pass occupies residues 709-729 (LGLPKGNQIVGWFVLVTSLLM). At 730-744 (PLAYRLQPNSHYMHR) the chain is on the cytoplasmic side. A helical transmembrane segment spans residues 745–767 (LAIIFLTCAPTFVILTISYEGLF). Residues 768 to 819 (YVAFSITLLSWVRLEYAVDAFTQEKAKKQATVAGSQQHTPSTFRPLSLSDAR) are Lumenal-facing. A helical transmembrane segment spans residues 820–840 (IALFFMVLLQSAFFSTGNIAS). Residues 841–862 (ISSFSLESVSRLIPVFDPFSQG) are Cytoplasmic-facing. A helical transmembrane segment spans residues 863–883 (ALLILKIIIPFFLISANLGVL). The Lumenal segment spans residues 884–892 (NKRLGVAPS). Residues 893 to 913 (AIFMVVLTASDVLTLYFFWVV) form a helical membrane-spanning segment. Residues 914-929 (KDEGSWLEIGSTITHF) are Cytoplasmic-facing. Residues 930-950 (AIASFLCVFVAALEFVSAAFI) traverse the membrane as a helical segment. The Lumenal portion of the chain corresponds to 951 to 981 (AGIEVEDTKSAALTSASTKADEKVPPVAGAE).

Belongs to the PIGG/PIGN/PIGO family. PIGN subfamily.

The protein localises to the endoplasmic reticulum membrane. The protein operates within glycolipid biosynthesis; glycosylphosphatidylinositol-anchor biosynthesis. In terms of biological role, ethanolamine phosphate transferase involved in glycosylphosphatidylinositol-anchor biosynthesis. Transfers ethanolamine phosphate to the first alpha-1,4-linked mannose of the glycosylphosphatidylinositol precursor of GPI-anchor. The chain is GPI ethanolamine phosphate transferase 1 (MCD4) from Gibberella zeae (strain ATCC MYA-4620 / CBS 123657 / FGSC 9075 / NRRL 31084 / PH-1) (Wheat head blight fungus).